The primary structure comprises 228 residues: MSTETNPGLAQRRLWQLISPTLPIGAYSYSAGLEYAVEAGWLRNADAVADWLQGQLHHALAPVDIPALARLHAAWQSDDAVAVHYWSQWLRACRETKELREEDRHVGQALARLLRDLDLPEAAPWVDDPIAGWPTLYALAVARWAIPLETAAEAYLWAWCENQVSAAIKLVPLGQTAGQRLLLEMAEPVGEAARQGLALEDEEMGGGLPGVALASSLHETQYSRLFRS.

It belongs to the UreF family. UreD, UreF and UreG form a complex that acts as a GTP-hydrolysis-dependent molecular chaperone, activating the urease apoprotein by helping to assemble the nickel containing metallocenter of UreC. The UreE protein probably delivers the nickel.

The protein localises to the cytoplasm. Required for maturation of urease via the functional incorporation of the urease nickel metallocenter. This chain is Urease accessory protein UreF, found in Alkalilimnicola ehrlichii (strain ATCC BAA-1101 / DSM 17681 / MLHE-1).